A 475-amino-acid polypeptide reads, in one-letter code: Ribulose bisphosphate carboxylase large chain (475 aa).

Residues 1-2 (MV) constitute a propeptide that is removed on maturation. P3 bears the N-acetylproline mark. K14 is subject to N6,N6,N6-trimethyllysine. The substrate site is built by N123 and T173. The active-site Proton acceptor is the K175. K177 provides a ligand contact to substrate. 3 residues coordinate Mg(2+): K201, D203, and E204. K201 bears the N6-carboxylysine mark. The active-site Proton acceptor is H294. Substrate is bound by residues R295, H327, and S379.

Belongs to the RuBisCO large chain family. Type I subfamily. Heterohexadecamer of 8 large chains and 8 small chains. It depends on Mg(2+) as a cofactor.

Its subcellular location is the plastid. The protein localises to the chloroplast. The catalysed reaction is 2 (2R)-3-phosphoglycerate + 2 H(+) = D-ribulose 1,5-bisphosphate + CO2 + H2O. The enzyme catalyses D-ribulose 1,5-bisphosphate + O2 = 2-phosphoglycolate + (2R)-3-phosphoglycerate + 2 H(+). Functionally, ruBisCO catalyzes two reactions: the carboxylation of D-ribulose 1,5-bisphosphate, the primary event in carbon dioxide fixation, as well as the oxidative fragmentation of the pentose substrate in the photorespiration process. Both reactions occur simultaneously and in competition at the same active site. The sequence is that of Ribulose bisphosphate carboxylase large chain from Chlamydomonas moewusii (Chlamydomonas eugametos).